A 249-amino-acid chain; its full sequence is Metallo-beta-lactamase type 2 (249 aa).

A signal peptide spans 1 to 22 (MLKKIKISLILALGLTSLQAFG). Zn(2+) contacts are provided by His-98, His-100, Asp-102, His-161, and Cys-180. Lys-183 contributes to the substrate binding site. His-222 contributes to the Zn(2+) binding site.

This sequence belongs to the metallo-beta-lactamase superfamily. Class-B beta-lactamase family. In terms of assembly, monomer. Zn(2+) is required as a cofactor.

The protein localises to the periplasm. It catalyses the reaction a beta-lactam + H2O = a substituted beta-amino acid. In terms of biological role, confers resistance to the different beta-lactams antibiotics (penicillin, cephalosporin and carbapenem) via the hydrolysis of the beta-lactam ring. In Elizabethkingia meningoseptica (Chryseobacterium meningosepticum), this protein is Metallo-beta-lactamase type 2 (blaB3).